The chain runs to 967 residues: Kinesin-like protein KIF28P (967 aa).

In terms of domain architecture, Kinesin motor spans 7–355 (DSVKAVRVRP…LRYAERERKI (349 aa)). Position 111–118 (111–118 (GQTGSGKS)) interacts with ATP. The 63-residue stretch at 410–472 (APCPRPALSP…LQHLDRLILG (63 aa)) folds into the FHA domain. The stretch at 822-851 (NQIPELYLKLLKLEQETEPLRNINRALREE) forms a coiled coil.

The protein belongs to the TRAFAC class myosin-kinesin ATPase superfamily. Kinesin family.

The protein localises to the mitochondrion membrane. In terms of biological role, microtubule-dependent motor protein required for mitochondrion morphology and transport of mitochondria in neuronal cells. This is Kinesin-like protein KIF28P (KIF28P) from Homo sapiens (Human).